Reading from the N-terminus, the 348-residue chain is Phosphoribosylformylglycinamidine cyclo-ligase (348 aa).

It belongs to the AIR synthase family.

It localises to the cytoplasm. The enzyme catalyses 2-formamido-N(1)-(5-O-phospho-beta-D-ribosyl)acetamidine + ATP = 5-amino-1-(5-phospho-beta-D-ribosyl)imidazole + ADP + phosphate + H(+). The protein operates within purine metabolism; IMP biosynthesis via de novo pathway; 5-amino-1-(5-phospho-D-ribosyl)imidazole from N(2)-formyl-N(1)-(5-phospho-D-ribosyl)glycinamide: step 2/2. The chain is Phosphoribosylformylglycinamidine cyclo-ligase from Roseobacter denitrificans (strain ATCC 33942 / OCh 114) (Erythrobacter sp. (strain OCh 114)).